Reading from the N-terminus, the 113-residue chain is Nascent polypeptide-associated complex protein (113 aa).

The 69-residue stretch at 5–73 (GMNPAKMKQM…AKEVPKSLEI (69 aa)) folds into the NAC-A/B domain.

This sequence belongs to the NAC-alpha family. As to quaternary structure, homodimer. Interacts with the ribosome. Binds ribosomal RNA.

Contacts the emerging nascent chain on the ribosome. This is Nascent polypeptide-associated complex protein from Methanosarcina acetivorans (strain ATCC 35395 / DSM 2834 / JCM 12185 / C2A).